We begin with the raw amino-acid sequence, 292 residues long: (S)-phenoxypropionate/alpha-ketoglutarate-dioxygenase (292 aa).

Fe cation is bound by residues His108 and Asp110. 2-oxoglutarate-binding residues include Thr135 and Trp247. Position 262 (His262) interacts with Fe cation. Arg273 serves as a coordination point for 2-oxoglutarate.

This sequence belongs to the TfdA dioxygenase family. As to quaternary structure, monomer. Fe cation serves as cofactor. L-ascorbate is required as a cofactor.

The enzyme catalyses (S)-2-(4-chloro-2-methylphenoxy)propanoate + 2-oxoglutarate + O2 = 2-methyl-4-chlorophenol + pyruvate + succinate + CO2. The catalysed reaction is (S)-(2,4-dichlorophenoxy)propanoate + 2-oxoglutarate + O2 = 2,4-dichlorophenol + pyruvate + succinate + CO2. The protein operates within xenobiotic degradation; 2-(2,4-dichlorophenoxy)propanoate degradation. Its activity is regulated as follows. Inhibited by divalent cations, most significantly by copper and nickel, and by diethylpyrocarbonate (DEPC). Involved in the degradation of the phenoxypropionate herbicides. Catalyzes the enantiospecific cleavage of the ether bond in the herbicid S-dichlorprop ((S)-2-(2,4-dichlorophenoxy)propionate)(S-2,4-DP) and S-mecoprop ((S)-2-(4-chloro-2-methylphenoxy)propionate)(S-2,4-MCPP). It can also accept (RS)-2-(4-chlorophenoxy)propionate, (RS)-2-(m-chlorophenoxy)propionate and phenoxyacetate derivatives such as 2,4-dichlorophenoxyacetate (2,4-D), however it can only accept 2-oxoglutarate as oxygen acceptor. This chain is (S)-phenoxypropionate/alpha-ketoglutarate-dioxygenase, found in Delftia acidovorans (Pseudomonas acidovorans).